We begin with the raw amino-acid sequence, 224 residues long: Peroxiredoxin-6 (224 aa).

The Thioredoxin domain maps to 5–169 (LLLGDVAPNF…ILRVVISLQL (165 aa)). The required and sufficient for targeting to lysosomes and lamellar bodies stretch occupies residues 31-40 (DSWGILFSHP). Phosphothreonine is present on T44. C47 serves as the catalytic Cysteine sulfenic acid (-SOH) intermediate; for peroxidase activity. Position 63 is an N6-acetyllysine (K63). Y89 is subject to Phosphotyrosine. The For phospholipase activity role is filled by D140. T177 carries the post-translational modification Phosphothreonine; by MAPK. K209 bears the N6-acetyllysine; alternate mark. K209 carries the post-translational modification N6-succinyllysine; alternate.

The protein belongs to the peroxiredoxin family. Prx6 subfamily. In terms of assembly, homodimer. Interacts with GSTP1; mediates PRDX6 glutathionylation and regeneration. Interacts with APEX1. Interacts with STH. May interact with FAM168B. May interact with HTR2A. Irreversibly inactivated by overoxidation of Cys-47 to sulfinic acid (Cys-SO(2)H) and sulfonic acid (Cys-SO(3)H) forms upon oxidative stress. In terms of processing, phosphorylation at Thr-177 by MAP kinases increases the phospholipase activity of the enzyme. The phosphorylated form exhibits a greater lysophosphatidylcholine acyltransferase activity compared to the non-phosphorylated form.

Its subcellular location is the cytoplasm. It is found in the lysosome. The enzyme catalyses a hydroperoxide + 2 glutathione = an alcohol + glutathione disulfide + H2O. It catalyses the reaction a 1,2-diacyl-sn-glycero-3-phosphocholine + H2O = a 1-acyl-sn-glycero-3-phosphocholine + a fatty acid + H(+). It carries out the reaction a 1-acyl-sn-glycero-3-phosphocholine + an acyl-CoA = a 1,2-diacyl-sn-glycero-3-phosphocholine + CoA. The catalysed reaction is 1-hexadecanoyl-sn-glycero-3-phosphocholine + hexadecanoyl-CoA = 1,2-dihexadecanoyl-sn-glycero-3-phosphocholine + CoA. The enzyme catalyses 1,2-dihexadecanoyl-sn-glycero-3-phosphocholine + H2O = 1-hexadecanoyl-sn-glycero-3-phosphocholine + hexadecanoate + H(+). Its activity is regulated as follows. MJ33 or lithium;[(2R)-1-hexadecoxy-3-(2,2,2-trifluoroethoxy)propan-2-yl] methyl phosphate inhibits its phospholipase A2 activity. CI-976 or 2,2-Dimethyl-N-(2,4,6-trimethoxyphenyl)dodecanamide inhibits its lysophosphatidylcholine acyltransferase activity. In terms of biological role, thiol-specific peroxidase that catalyzes the reduction of hydrogen peroxide and organic hydroperoxides to water and alcohols, respectively. Can reduce H(2)O(2) and short chain organic, fatty acid, and phospholipid hydroperoxides. Also has phospholipase activity, can therefore either reduce the oxidized sn-2 fatty acyl group of phospholipids (peroxidase activity) or hydrolyze the sn-2 ester bond of phospholipids (phospholipase activity). These activities are dependent on binding to phospholipids at acidic pH and to oxidized phospholipds at cytosolic pH. Plays a role in cell protection against oxidative stress by detoxifying peroxides and in phospholipid homeostasis. Exhibits acyl-CoA-dependent lysophospholipid acyltransferase which mediates the conversion of lysophosphatidylcholine (1-acyl-sn-glycero-3-phosphocholine or LPC) into phosphatidylcholine (1,2-diacyl-sn-glycero-3-phosphocholine or PC). Shows a clear preference for LPC as the lysophospholipid and for palmitoyl CoA as the fatty acyl substrate. The sequence is that of Peroxiredoxin-6 (PRDX6) from Homo sapiens (Human).